The primary structure comprises 69 residues: DPEELTSHSYKPLGSGFFGLMGNRLPVSFLDLARAHPFTGTGLHLQMQEAPCDYRHGNRFEGGAPAAKA.

The chain is ATP synthase subunits region ORF 1 from Fuscovulum blasticum (Rhodobacter blasticus).